A 970-amino-acid polypeptide reads, in one-letter code: Cullin-4B (970 aa).

Over residues 1 to 14 (MSRSTRSKERREND) the composition is skewed to basic and acidic residues. 2 disordered regions span residues 1–157 (MSRS…SFCL) and 189–211 (AEESSSSSSSSSPTAATSQQQQQ). A Phosphothreonine modification is found at Thr15. The residue at position 17 (Ser17) is a Phosphoserine. Pro residues predominate over residues 36–57 (PPRPPYPPLLPPVFPPPTPPPQ). A compositionally biased stretch (low complexity) spans 78–98 (SGFSSPNPSAASAAAQEVRSA). The span at 99–109 (TDGNTSTTPPT) shows a compositional bias: polar residues. Residue Thr106 is modified to Phosphothreonine. Position 110 is a phosphoserine (Ser110). A Nuclear localization signal motif is present at residues 112–115 (KKRK). A compositionally biased stretch (low complexity) spans 117–126 (NSSSSSSNSS). Positions 146-155 (DSASPSTSSF) are enriched in polar residues. Phosphoserine is present on residues Ser154 and Ser200. Low complexity predominate over residues 192–211 (SSSSSSSSSPTAATSQQQQQ). The residue at position 202 (Thr202) is a Phosphothreonine. Residue Lys247 forms a Glycyl lysine isopeptide (Lys-Gly) (interchain with G-Cter in ubiquitin) linkage. At Ser250 the chain carries Phosphoserine. A Cullin neddylation domain is found at 902 to 962 (DRQYQIDAAI…RDYMERDKEN (61 aa)). Lys916 participates in a covalent cross-link: Glycyl lysine isopeptide (Lys-Gly) (interchain with G-Cter in NEDD8).

It belongs to the cullin family. Component of multiple DCX (DDB1-CUL4-X-box) E3 ubiquitin-protein ligase complexes that seem to be formed of DDB1, CUL4A or CUL4B, RBX1 and a variable substrate recognition component which seems to belong to a protein family described as DCAF (Ddb1- and Cul4-associated factor) or CDW (CUL4-DDB1-associated WD40-repeat) proteins. Component of the DCX(DTL) complex with the putative substrate recognition component DTL. Component of the DCX(DDB2) complex with the putative substrate recognition component DDB2. Component of DCX complexes part of the DesCEND (destruction via C-end degrons) pathway, which contain either TRPC4AP or DCAF12 as substrate-recognition component. Component of the DCX(AMBRA1) complex with the substrate recognition component AMBRA1. Part of a complex with RBX1 and TIP120A/CAND1. Component of the DCX(WDR77) complex, composed of Cul4b, Ddb1, Wdr77 and Rbx1. Interacts with RBX1, GRWD1, MLST8, SMU1, TLE2, TLE3, DCAF1, DDA1, DCAF6, DCAF17, DDB2, DCAF8, TIP120A/CAND1 and TMEM113. Interacts with cyclin E (CCNE1 or CCNE2) and with importins alpha-1 (KPNA2), alpha-3 (KPNA4), alpha-5 (KPNA1) and beta-1 (KPNB1). May interact with WDR26, WDR51B, SNRNP40, WDR61, WDR76 and WDR5. Interacts (unneddylated form) with DCUN1D1, DCUN1D2, DCUN1D3, DCUN1D4 and DCUN1D5; these interactions promote the cullin neddylation. In terms of processing, neddylated. Deneddylated via its interaction with the COP9 signalosome (CSN) complex. In terms of tissue distribution, expressed in oocytes (at protein level).

The protein resides in the cytoplasm. It localises to the nucleus. It participates in protein modification; protein ubiquitination. Its function is as follows. Core component of multiple cullin-RING-based E3 ubiquitin-protein ligase complexes which mediate the ubiquitination and subsequent proteasomal degradation of target proteins. The functional specificity of the E3 ubiquitin-protein ligase complex depends on the variable substrate recognition subunit. CUL4B may act within the complex as a scaffold protein, contributing to catalysis through positioning of the substrate and the ubiquitin-conjugating enzyme. Plays a role as part of the E3 ubiquitin-protein ligase complex in polyubiquitination of CDT1, histone H2A, histone H3 and histone H4 in response to radiation-induced DNA damage. Targeted to UV damaged chromatin by DDB2 and may be important for DNA repair and DNA replication. A number of DCX complexes (containing either TRPC4AP or DCAF12 as substrate-recognition component) are part of the DesCEND (destruction via C-end degrons) pathway, which recognizes a C-degron located at the extreme C terminus of target proteins, leading to their ubiquitination and degradation. The DCX(AMBRA1) complex is a master regulator of the transition from G1 to S cell phase by mediating ubiquitination of phosphorylated cyclin-D (CCND1, CCND2 and CCND3). The DCX(AMBRA1) complex also acts as a regulator of Cul5-RING (CRL5) E3 ubiquitin-protein ligase complexes by mediating ubiquitination and degradation of Elongin-C (ELOC) component of CRL5 complexes. Required for ubiquitination of cyclin E (CCNE1 or CCNE2), and consequently, normal G1 cell cycle progression. Component of the DCX(WDR77) complex, which mediates ubiquitination and degradation of Irgm1 in intestinal cells. Regulates the mammalian target-of-rapamycin (mTOR) pathway involved in control of cell growth, size and metabolism. Specific CUL4B regulation of the mTORC1-mediated pathway is dependent upon 26S proteasome function and requires interaction between CUL4B and MLST8. With CUL4A, contributes to ribosome biogenesis. The sequence is that of Cullin-4B from Mus musculus (Mouse).